A 369-amino-acid chain; its full sequence is MALVQRIPISSSSIRNWQQARTNLTPICCLHYNTASSSSSPFTEKHSVERYQRDQWLYKAVEPTPPSTPSPSPFEDEVFVRENDIASQLPELKKLLAVLKEKRVKGCKGGDCGPGDVYLVGTGPGDPELLTLKAVRVIQSADLLLYDRLVSNDVLELVAPDARLLYVGKTAGYHSRTQEEIHELLLNFAEAGATVVRLKGGDPLVFGRGGEEMDFLQQQGIRVQVIPGITAASGIAAELGIPLTHRGVATSVRFLTGHSRKGGTDPLFVAENAADPDTTLVVYMGLGTLPSLAQKLMDHGLPSDTPAVAVERGTTPLQRTVFAELKDFATEIQSAGLVSPTLIIIGKVVELSPLWPHCTKESSCLVETR.

A chloroplast-targeting transit peptide spans 1–28 (MALVQRIPISSSSIRNWQQARTNLTPIC). Residues P124, 200–202 (GGD), 230–231 (TA), M284, and T341 contribute to the S-adenosyl-L-homocysteine site.

The protein belongs to the precorrin methyltransferase family. In terms of tissue distribution, mostly expressed in leaves, and, to a lower extent, in stems, flowers and siliques.

Its subcellular location is the plastid. It localises to the chloroplast. It catalyses the reaction uroporphyrinogen III + 2 S-adenosyl-L-methionine = precorrin-2 + 2 S-adenosyl-L-homocysteine + H(+). It functions in the pathway porphyrin-containing compound metabolism; siroheme biosynthesis; precorrin-2 from uroporphyrinogen III: step 1/1. Essential protein required for siroheme biosynthesis. Catalyzes the two successive C-2 and C-7 methylation reactions involved in the conversion of uroporphyrinogen III to precorrin-2 via the intermediate formation of precorrin-1. It is a step in the biosynthesis of siroheme. Promotes nitrogen and sulfur assimilation as well as photosynthesis efficiency by triggering chlorophyll, nitrite reductase (NiR) and sulfite reductase (SiR) biosynthesis. This Arabidopsis thaliana (Mouse-ear cress) protein is S-adenosyl-L-methionine-dependent uroporphyrinogen III methyltransferase, chloroplastic.